A 129-amino-acid polypeptide reads, in one-letter code: Glycine cleavage system H protein (129 aa).

The region spanning 22-103 (TGTVGITDYA…AHTAWIMKIE (82 aa)) is the Lipoyl-binding domain. Lys63 is subject to N6-lipoyllysine.

It belongs to the GcvH family. The glycine cleavage system is composed of four proteins: P, T, L and H. (R)-lipoate serves as cofactor.

Its function is as follows. The glycine cleavage system catalyzes the degradation of glycine. The H protein shuttles the methylamine group of glycine from the P protein to the T protein. In Acidobacterium capsulatum (strain ATCC 51196 / DSM 11244 / BCRC 80197 / JCM 7670 / NBRC 15755 / NCIMB 13165 / 161), this protein is Glycine cleavage system H protein.